Here is a 394-residue protein sequence, read N- to C-terminus: NAD(P)H-quinone oxidoreductase subunit H (394 aa).

Belongs to the complex I 49 kDa subunit family. As to quaternary structure, NDH-1 can be composed of about 15 different subunits; different subcomplexes with different compositions have been identified which probably have different functions.

Its subcellular location is the cellular thylakoid membrane. It catalyses the reaction a plastoquinone + NADH + (n+1) H(+)(in) = a plastoquinol + NAD(+) + n H(+)(out). It carries out the reaction a plastoquinone + NADPH + (n+1) H(+)(in) = a plastoquinol + NADP(+) + n H(+)(out). NDH-1 shuttles electrons from an unknown electron donor, via FMN and iron-sulfur (Fe-S) centers, to quinones in the respiratory and/or the photosynthetic chain. The immediate electron acceptor for the enzyme in this species is believed to be plastoquinone. Couples the redox reaction to proton translocation, and thus conserves the redox energy in a proton gradient. Cyanobacterial NDH-1 also plays a role in inorganic carbon-concentration. The sequence is that of NAD(P)H-quinone oxidoreductase subunit H from Prochlorococcus marinus (strain MIT 9303).